The chain runs to 641 residues: Calpain-6 (641 aa).

Residues L26–V343 form the Calpain catalytic domain. The tract at residues N344–R495 is domain III. In terms of domain architecture, C2 spans T498–A621.

It belongs to the peptidase C2 family. In terms of assembly, interacts (via domain III) with microtubules. Interacts (via domain II) with ARHGEF2 (via the N-terminal zinc finger).

The protein resides in the cytoplasm. It localises to the perinuclear region. Its subcellular location is the cytoskeleton. It is found in the spindle. Its function is as follows. Microtubule-stabilizing protein that may be involved in the regulation of microtubule dynamics and cytoskeletal organization. May act as a regulator of RAC1 activity through interaction with ARHGEF2 to control lamellipodial formation and cell mobility. Does not seem to have protease activity as it has lost the active site residues. The protein is Calpain-6 (Capn6) of Rattus norvegicus (Rat).